A 313-amino-acid polypeptide reads, in one-letter code: Porphobilinogen deaminase (313 aa).

S-(dipyrrolylmethanemethyl)cysteine is present on cysteine 242.

It belongs to the HMBS family. Monomer. Dipyrromethane serves as cofactor.

The enzyme catalyses 4 porphobilinogen + H2O = hydroxymethylbilane + 4 NH4(+). Its pathway is porphyrin-containing compound metabolism; protoporphyrin-IX biosynthesis; coproporphyrinogen-III from 5-aminolevulinate: step 2/4. Its function is as follows. Tetrapolymerization of the monopyrrole PBG into the hydroxymethylbilane pre-uroporphyrinogen in several discrete steps. This Pseudomonas entomophila (strain L48) protein is Porphobilinogen deaminase.